Consider the following 85-residue polypeptide: Small ribosomal subunit protein bS16 (85 aa).

This sequence belongs to the bacterial ribosomal protein bS16 family.

The chain is Small ribosomal subunit protein bS16 from Rubrobacter xylanophilus (strain DSM 9941 / JCM 11954 / NBRC 16129 / PRD-1).